A 104-amino-acid polypeptide reads, in one-letter code: Gastrin (104 aa).

Residues 1-21 (MQRLCVYVLILALALATFSEA) form the signal peptide. Residues 22-58 (SWKPRSRLQDAPSGPGANRGLEPHGLDQLGPASHHRR) constitute a propeptide that is removed on maturation. Residues 22–70 (SWKPRSRLQDAPSGPGANRGLEPHGLDQLGPASHHRRQLGLQGPPQLVA) are disordered. Pyrrolidone carboxylic acid is present on residues Q59 and Q76. At Y87 the chain carries Sulfotyrosine. F92 carries the post-translational modification Phenylalanine amide. Residue S96 is modified to Phosphoserine. Positions 96 to 104 (SAEEGDQRP) are excised as a propeptide.

The protein belongs to the gastrin/cholecystokinin family.

Its subcellular location is the secreted. Functionally, gastrin stimulates the stomach mucosa to produce and secrete hydrochloric acid and the pancreas to secrete its digestive enzymes. It also stimulates smooth muscle contraction and increases blood circulation and water secretion in the stomach and intestine. This is Gastrin (GAST) from Canis lupus familiaris (Dog).